Reading from the N-terminus, the 528-residue chain is MGKASKATKKFTKNHLKNTIERRKQLARSKKVYGTKNRNSHTKNKLESGTNDNNKNKEDLSKLYSDVTTSNTSHEKDGSEDISVLNVNSKGASLNQVSTQKRRSEKDLLAAIAYCQKLSGTNQADALWKNVEKDLKETLDNVDFDARSKILQDLRLEYAEILLTKFNFEKKGYQNLSSALDTILHIKKFSKFPNGLVTQLCNIFVNHSKAREDIQKAVNHICKIDSSLSVAVFQVFYSPLLDFFKSSPSEVNDFDTLEELQLFLIELLSLNSRFYQKIAFAYLSQLDAHLKRCLKESESSDAYKLIYNWQFTLSLRFWLHVISFLWNDYESISKEISPIAINLTLDCIRLIPTEQYYPLRLHLLKSLVNICRSTRLYIPLSSQFLEMIPFVLRRSSPLSDDKEVMYNFDMYSTLHVPKECLLSKSYRNNVRKEVILLMTEYFAIFSNSIAFPELSAPIIAQLRGLVNESAPGKHVLTFLNKLESTFSFVESRRMNVDFTLNDTSQVEAFEKDLDWRSTPMGKLVSDTT.

2 stretches are compositionally biased toward basic residues: residues 1–16 (MGKASKATKKFTKNHL) and 25–43 (QLARSKKVYGTKNRNSHTK). The tract at residues 1 to 59 (MGKASKATKKFTKNHLKNTIERRKQLARSKKVYGTKNRNSHTKNKLESGTNDNNKNKED) is disordered.

This sequence belongs to the NOC2 family.

Its subcellular location is the nucleus. The protein resides in the nucleolus. This is an uncharacterized protein from Schizosaccharomyces pombe (strain 972 / ATCC 24843) (Fission yeast).